Here is an 86-residue protein sequence, read N- to C-terminus: Haditoxin (86 aa).

A signal peptide spans 1-21 (MKTLLLTLVVVTIVYLDLGYT). 4 disulfide bridges follow: cysteine 24-cysteine 45, cysteine 38-cysteine 62, cysteine 66-cysteine 78, and cysteine 79-cysteine 84.

It belongs to the three-finger toxin family. Short-chain subfamily. Orphan group VIII (haditoxin) sub-subfamily. In terms of assembly, homodimer; non-covalently linked. As to expression, expressed by the venom gland.

The protein localises to the secreted. Functionally, antagonist of muscle (alpha-1-beta-1-delta-epsilon/CHRNA1-CHRNB1-CHRND-CHRNE) and neuronal (alpha-7/CHRNA7, alpha-3-beta-2/CHRNA3-CHRNB2, alpha-4-beta-2/CHRNA4-CHRNB2) nicotinic acetylcholine receptors (nAChR). The highest affinity is for human alpha-7/CHRNA7 nAChRs (IC(50)=180 nM), compared to human alpha-1-beta-1-delta-epsilon/CHRNA1-CHRNB1-CHRND-CHRNE nAChR (IC(50)= 550 nM), alpha-3-beta-2/CHRNA3-CHRNB2 nAChR (IC(50)=500 nM), and alpha-4-beta-2/CHRNA4-CHRNB2 nAChR (IC(50)=2.6 uM). The chain is Haditoxin from Ophiophagus hannah (King cobra).